The following is a 142-amino-acid chain: MAP3K7 C-terminal-like protein (142 aa).

As to expression, detected in lung and peripheral blood leukocytes. Expressed predominantly in peripheral blood leukocytes and ubiquitously in adult and fetal tissues. Also expressed strongly in breast carcinoma GI-101, colon adenocarcinoma GI-112, and prostatic adenocarcinoma PC3.

This is MAP3K7 C-terminal-like protein (MAP3K7CL) from Homo sapiens (Human).